The primary structure comprises 137 residues: Small ribosomal subunit protein uS12 (137 aa).

The interval 1 to 57 (MPTINQLVRKPRRAQVTKSKSPAMNVGYNSRKKVQTKLASPQKRGVATRVGTMTPKK) is disordered. At Asp102 the chain carries 3-methylthioaspartic acid.

The protein belongs to the universal ribosomal protein uS12 family. As to quaternary structure, part of the 30S ribosomal subunit. Contacts proteins S8 and S17. May interact with IF1 in the 30S initiation complex.

Its function is as follows. With S4 and S5 plays an important role in translational accuracy. Functionally, interacts with and stabilizes bases of the 16S rRNA that are involved in tRNA selection in the A site and with the mRNA backbone. Located at the interface of the 30S and 50S subunits, it traverses the body of the 30S subunit contacting proteins on the other side and probably holding the rRNA structure together. The combined cluster of proteins S8, S12 and S17 appears to hold together the shoulder and platform of the 30S subunit. The protein is Small ribosomal subunit protein uS12 of Lactococcus lactis subsp. lactis (strain IL1403) (Streptococcus lactis).